The primary structure comprises 79 residues: Putative antitoxin VapB1 (79 aa).

Antitoxin component of a possible type II toxin-antitoxin (TA) system. The cognate toxin is VapC1. The polypeptide is Putative antitoxin VapB1 (vapB1) (Mycobacterium tuberculosis (strain ATCC 25618 / H37Rv)).